The sequence spans 523 residues: Factor arrest protein 8 (523 aa).

Positions 26–76 form a coiled coil; sequence TKNERDRITWELERSEMKARIAELEGENRDLKHQLNQIQSKAVSPEGEKEE. The interval 61-80 is disordered; it reads NQIQSKAVSPEGEKEEKHVP. Positions 71-80 are enriched in basic and acidic residues; sequence EGEKEEKHVP. Serine 115 is subject to Phosphoserine. A Phosphothreonine modification is found at threonine 132. Residues 150 to 171 are disordered; the sequence is ALLDTKPNPKQGPSESPSPTKV. The span at 160 to 171 shows a compositional bias: polar residues; it reads QGPSESPSPTKV.

As to quaternary structure, component of a complex at least composed of FAR3, FAR7, FAR8, FAR10, FAR11 and VPS64.

It is found in the cytoplasm. Its subcellular location is the endoplasmic reticulum. In terms of biological role, participates in the control of the reentry into the cell cycle following pheromone treatment. The chain is Factor arrest protein 8 (FAR8) from Saccharomyces cerevisiae (strain ATCC 204508 / S288c) (Baker's yeast).